Consider the following 224-residue polypeptide: Cytidylate kinase (224 aa).

12–20 contacts ATP; that stretch reads GPAGAGKST.

Belongs to the cytidylate kinase family. Type 1 subfamily.

It localises to the cytoplasm. The catalysed reaction is CMP + ATP = CDP + ADP. It catalyses the reaction dCMP + ATP = dCDP + ADP. This is Cytidylate kinase from Caldanaerobacter subterraneus subsp. tengcongensis (strain DSM 15242 / JCM 11007 / NBRC 100824 / MB4) (Thermoanaerobacter tengcongensis).